Here is a 644-residue protein sequence, read N- to C-terminus: MSEMIRITFPDGAVKEFPKGTTTEQIAASISPGLKKKAIAGKLNDRFIDLRTPIQEDGSISIITQDMPEALDILRHSTAHLMAQAIKRLYKNVKLGVGPVIENGFYYDIDMEESLTPEDLPKIEQEMRKIVKENLEIVRKEVSREEAIRLYEEIGDDLKLELINDIPEGETISIYEQGEFFDLCRGVHVPSTGKIKEFKLLNISGAYWRGDSNNKMLQRIYGTAFFKKEDLDEYLRQLQEAKERDHRKLGKELELFMTSQKVGQGLPLWLPKGATIRRIIERYIVDKEIELGYQHVYTPVLGSVELYKTSGHWDHYKDNMFPPMEMDNEQLVLRPMNCPHHMMIYKSKIHSYRELPIRIAELGTMHRYEMSGALSGLQRVRGMTLNDAHIFVRPDQIKDEFKRVVNLILEVYKDFGLDEYSFRLSYRDPHDKEKYYDDDEMWEKAQNMLREAMDELGLEYYEAEGEAAFYGPKLDVQVRTALGKDETLSTVQLDFLLPERFDLTYIGEDGKPHRPVVIHRGVVSTMERFVAFLIEEYKGAFPTWLAPVQVEVIPVSPAAHLDYAYKVKEALQSQGFRVEVDERDEKIGYKIREAQIQKIPYMLVVGDKEMAENAVNVRKYGEQKSETMSLDDFIAALKAEVRRN.

The 62-residue stretch at glutamate 3–threonine 64 folds into the TGS domain. Positions aspartate 245 to proline 542 are catalytic. Zn(2+) contacts are provided by cysteine 338, histidine 389, and histidine 519.

It belongs to the class-II aminoacyl-tRNA synthetase family. Homodimer. Requires Zn(2+) as cofactor.

The protein localises to the cytoplasm. It catalyses the reaction tRNA(Thr) + L-threonine + ATP = L-threonyl-tRNA(Thr) + AMP + diphosphate + H(+). Catalyzes the attachment of threonine to tRNA(Thr) in a two-step reaction: L-threonine is first activated by ATP to form Thr-AMP and then transferred to the acceptor end of tRNA(Thr). Also edits incorrectly charged L-seryl-tRNA(Thr). This chain is Threonine--tRNA ligase, found in Geobacillus sp. (strain WCH70).